Here is a 447-residue protein sequence, read N- to C-terminus: GTPase Der (447 aa).

EngA-type G domains are found at residues 4-165 and 180-357; these read QIIT…PEEE and LQIV…KIWN. Residues 10-17, 57-61, 119-122, 186-193, 233-237, and 298-301 each bind GTP; these read GRPNVGKS, DTPGL, NKCE, GRPNAGKS, DTAGL, and NKWD. Positions 358–443 constitute a KH-like domain; it reads KKITTSKLNE…PIRFIYVKTK (86 aa).

Belongs to the TRAFAC class TrmE-Era-EngA-EngB-Septin-like GTPase superfamily. EngA (Der) GTPase family. In terms of assembly, associates with the 50S ribosomal subunit.

Its function is as follows. GTPase that plays an essential role in the late steps of ribosome biogenesis. This is GTPase Der from Rickettsia conorii (strain ATCC VR-613 / Malish 7).